The primary structure comprises 461 residues: Lysosomal proton-coupled steroid conjugate and bile acid symporter SLC46A3 (461 aa).

A signal peptide spans 1–25 (MKILFVEPAIFLSAFAMTLTGPLTT). Topologically, residues 26-73 (QYVYRRIWEETGNYTFSSDSNISECEKNKSSPIFAFQEEVQKKVSRFN) are extracellular. N38, N46, and N53 each carry an N-linked (GlcNAc...) asparagine glycan. Residues 74 to 94 (LQMDISGLIPGLVSTFILLSI) form a helical membrane-spanning segment. Residues 95–101 (SDHYGRK) are Cytoplasmic-facing. The helical transmembrane segment at 102–124 (FPMILSSVGALATSVWLCLLCYF) threads the bilayer. Residues 125–133 (AFPFQLLIA) lie on the Extracellular side of the membrane. A helical membrane pass occupies residues 134-156 (STFIGAFCGNYTTFWGACFAYIV). Topologically, residues 157–170 (DQCKEHKQKTIRIA) are cytoplasmic. A helical transmembrane segment spans residues 171-191 (IIDFLLGLVTGLTGLSSGYFI). The Extracellular segment spans residues 192 to 197 (RELGFE). Residues 198–218 (WSFLIIAVSLAVNLIYILFFL) form a helical membrane-spanning segment. Over 219 to 261 (GDPVKECSSQNVTMSCSEGFKNLFYRTYMLFKNASGKRRFLLC) the chain is Cytoplasmic. A helical membrane pass occupies residues 262–282 (LLLFTVITYFFVVIGIAPIFI). At 283 to 294 (LYELDSPLCWNE) the chain is on the extracellular side. The chain crosses the membrane as a helical span at residues 295–315 (VFIGYGSALGSASFLTSFLGI). Residues 316 to 324 (WLFSYCMED) lie on the Cytoplasmic side of the membrane. Residues 325–345 (IHMAFIGIFTTMTGMAMTAFA) traverse the membrane as a helical segment. Over 346–347 (ST) the chain is Extracellular. A helical membrane pass occupies residues 348–368 (TLMMFLARVPFLFTIVPFSVL). Residues 369 to 382 (RSMLSKVVRSTEQG) are Cytoplasmic-facing. Residues 383–403 (TLFACIAFLETLGGVTAVSTF) form a helical membrane-spanning segment. At 404 to 415 (NGIYSATVAWYP) the chain is on the extracellular side. A helical membrane pass occupies residues 416-436 (GFTFLLSAGLLLLPAISLCVV). Over 437 to 461 (KCTSWNEGSYELLIQEESSEDASDR) the chain is Cytoplasmic. The Tyrosine-based lysosomal-sorting motif signature appears at 446–449 (YELL).

Belongs to the major facilitator superfamily. SLC46A family.

The protein resides in the lysosome membrane. The catalysed reaction is estrone 3-sulfate(out) + n H(+)(out) = estrone 3-sulfate(in) + n H(+)(in). The enzyme catalyses 25-hydroxyvitamin D3 sulfate(out) + n H(+)(out) = 25-hydroxyvitamin D3 sulfate(in) + n H(+)(in). It carries out the reaction cholate(out) + n H(+)(out) = cholate(in) + n H(+)(in). It catalyses the reaction glycocholate(out) + n H(+)(out) = glycocholate(in) + n H(+)(in). The catalysed reaction is taurocholate(out) + n H(+)(out) = taurocholate(in) + n H(+)(in). The enzyme catalyses dehydroepiandrosterone 3-sulfate(out) + n H(+)(out) = dehydroepiandrosterone 3-sulfate(in) + n H(+)(in). It carries out the reaction N-acetyl-D-muramoyl-L-alanyl-D-isoglutamine(out) + n H(+)(out) = N-acetyl-D-muramoyl-L-alanyl-D-isoglutamine(in) + n H(+)(in). It catalyses the reaction 2',3'-cGAMP(out) + n H(+)(out) = 2',3'-cGAMP(in) + n H(+)(in). Lysosomal proton-coupled steroid conjugate and bile acid transporter. Preferentially recognizes lipophilic steroid conjugates or bile acis as endogenous substrates and seems to mediate escape from lysosomes to the cytoplasm. Modulates hepatic cytosolic copper homeostasis, maybe acting as a lysosomal copper transporter and sequestering copper ions in the lysosome. Transports catabolites of non-cleavable antibody-drug conjugates from the lysosome to the cytoplasm. Delivers pathogen-associated molecular patterns to cytosolic pattern recognition receptors as part of the innate immune response to microbes. Selectively transports bacterial muramyl dipeptide (MDP) into the cytosol for recognition by NOD2, triggering inflammatory responses. Likely acts as a redundant importer of cyclic GMP-AMP dinucleotides (cGAMPs) in monocyte and macrophage cell lineages. The transport mechanism, its electrogenicity and stoichiometry remain to be elucidated. The polypeptide is Lysosomal proton-coupled steroid conjugate and bile acid symporter SLC46A3 (Homo sapiens (Human)).